The following is a 597-amino-acid chain: Elongation factor 4 (597 aa).

The region spanning 2 to 184 is the tr-type G domain; it reads KHIRNFSIIA…TIVKCIPAPE (183 aa). GTP contacts are provided by residues 14 to 19 and 131 to 134; these read DHGKST and NKID.

It belongs to the TRAFAC class translation factor GTPase superfamily. Classic translation factor GTPase family. LepA subfamily.

It is found in the cell inner membrane. The catalysed reaction is GTP + H2O = GDP + phosphate + H(+). In terms of biological role, required for accurate and efficient protein synthesis under certain stress conditions. May act as a fidelity factor of the translation reaction, by catalyzing a one-codon backward translocation of tRNAs on improperly translocated ribosomes. Back-translocation proceeds from a post-translocation (POST) complex to a pre-translocation (PRE) complex, thus giving elongation factor G a second chance to translocate the tRNAs correctly. Binds to ribosomes in a GTP-dependent manner. The sequence is that of Elongation factor 4 from Aliivibrio salmonicida (strain LFI1238) (Vibrio salmonicida (strain LFI1238)).